We begin with the raw amino-acid sequence, 333 residues long: Large ribosomal subunit protein uL3 (333 aa).

This sequence belongs to the universal ribosomal protein uL3 family. Part of the 50S ribosomal subunit. Forms a cluster with proteins L14 and L24e.

Its function is as follows. One of the primary rRNA binding proteins, it binds directly near the 3'-end of the 23S rRNA, where it nucleates assembly of the 50S subunit. In Methanocorpusculum labreanum (strain ATCC 43576 / DSM 4855 / Z), this protein is Large ribosomal subunit protein uL3.